We begin with the raw amino-acid sequence, 400 residues long: Methylthioribose kinase (400 aa).

ATP is bound by residues asparagine 40, lysine 57, and 111-113; that span reads EDL. Aspartate 229 contacts substrate. 246–248 serves as a coordination point for ATP; it reads DAE. Position 344 (arginine 344) interacts with substrate.

The protein belongs to the methylthioribose kinase family. As to quaternary structure, homodimer.

The enzyme catalyses 5-(methylsulfanyl)-D-ribose + ATP = 5-(methylsulfanyl)-alpha-D-ribose 1-phosphate + ADP + H(+). Its pathway is amino-acid biosynthesis; L-methionine biosynthesis via salvage pathway; S-methyl-5-thio-alpha-D-ribose 1-phosphate from S-methyl-5'-thioadenosine (hydrolase route): step 2/2. Its function is as follows. Catalyzes the phosphorylation of methylthioribose into methylthioribose-1-phosphate. The sequence is that of Methylthioribose kinase from Pectobacterium atrosepticum (strain SCRI 1043 / ATCC BAA-672) (Erwinia carotovora subsp. atroseptica).